The following is a 458-amino-acid chain: Argininosuccinate lyase (458 aa).

It belongs to the lyase 1 family. Argininosuccinate lyase subfamily.

The protein localises to the cytoplasm. The enzyme catalyses 2-(N(omega)-L-arginino)succinate = fumarate + L-arginine. Its pathway is amino-acid biosynthesis; L-arginine biosynthesis; L-arginine from L-ornithine and carbamoyl phosphate: step 3/3. The sequence is that of Argininosuccinate lyase from Heliobacterium mobile (Heliobacillus mobilis).